The following is a 211-amino-acid chain: Thymidylate kinase (211 aa).

Residue 7–14 participates in ATP binding; that stretch reads GMDGSGKT.

The protein belongs to the thymidylate kinase family.

It catalyses the reaction dTMP + ATP = dTDP + ADP. In terms of biological role, phosphorylation of dTMP to form dTDP in both de novo and salvage pathways of dTTP synthesis. The protein is Thymidylate kinase of Mesoplasma florum (strain ATCC 33453 / NBRC 100688 / NCTC 11704 / L1) (Acholeplasma florum).